A 449-amino-acid chain; its full sequence is tRNA-2-methylthio-N(6)-dimethylallyladenosine synthase (449 aa).

The region spanning 7-124 (DAFYIHTFGC…LPLLIKQVQQ (118 aa)) is the MTTase N-terminal domain. [4Fe-4S] cluster contacts are provided by C16, C52, C87, C163, C167, and C170. The Radical SAM core domain maps to 149–379 (RSSSMSAFVP…IECQNRISAS (231 aa)). In terms of domain architecture, TRAM spans 382 to 445 (SQAVGSVVEV…SATLLGEPLI (64 aa)).

Belongs to the methylthiotransferase family. MiaB subfamily. As to quaternary structure, monomer. Requires [4Fe-4S] cluster as cofactor.

The protein resides in the cytoplasm. It catalyses the reaction N(6)-dimethylallyladenosine(37) in tRNA + (sulfur carrier)-SH + AH2 + 2 S-adenosyl-L-methionine = 2-methylsulfanyl-N(6)-dimethylallyladenosine(37) in tRNA + (sulfur carrier)-H + 5'-deoxyadenosine + L-methionine + A + S-adenosyl-L-homocysteine + 2 H(+). In terms of biological role, catalyzes the methylthiolation of N6-(dimethylallyl)adenosine (i(6)A), leading to the formation of 2-methylthio-N6-(dimethylallyl)adenosine (ms(2)i(6)A) at position 37 in tRNAs that read codons beginning with uridine. In Chlorobium chlorochromatii (strain CaD3), this protein is tRNA-2-methylthio-N(6)-dimethylallyladenosine synthase.